Here is a 203-residue protein sequence, read N- to C-terminus: Ribosomal RNA small subunit methyltransferase G (203 aa).

S-adenosyl-L-methionine-binding positions include Gly-73, Leu-78, 124–125, and Arg-139; that span reads VE.

The protein belongs to the methyltransferase superfamily. RNA methyltransferase RsmG family.

The protein localises to the cytoplasm. The enzyme catalyses guanosine(527) in 16S rRNA + S-adenosyl-L-methionine = N(7)-methylguanosine(527) in 16S rRNA + S-adenosyl-L-homocysteine. Specifically methylates the N7 position of guanine in position 527 of 16S rRNA. This Haemophilus influenzae (strain PittEE) protein is Ribosomal RNA small subunit methyltransferase G.